A 262-amino-acid chain; its full sequence is Expansin-A7 (262 aa).

The N-terminal stretch at 1–30 (MGPISSSWSFNKFFSIVFVVFAISGEFVAG) is a signal peptide. The region spanning 55-167 (GGACGYGNLF…RRVPCQRSGG (113 aa)) is the Expansin-like EG45 domain. Intrachain disulfides connect Cys58–Cys86, Cys89–Cys162, and Cys94–Cys100. An Expansin-like CBD domain is found at 177–257 (YWLLIFVMNV…NWSGGKTYKS (81 aa)).

This sequence belongs to the expansin family. Expansin A subfamily.

It is found in the secreted. Its subcellular location is the cell wall. The protein resides in the membrane. Its function is as follows. Causes loosening and extension of plant cell walls by disrupting non-covalent bonding between cellulose microfibrils and matrix glucans. No enzymatic activity has been found. The sequence is that of Expansin-A7 (EXPA7) from Arabidopsis thaliana (Mouse-ear cress).